A 250-amino-acid polypeptide reads, in one-letter code: MSKENKTTDFGFTQVPWEEKQKKVAGVFHSVAAKYDLMNDLMSFGIHRIWKKQTIAKSGVRKGDNVLDLAGGTGDLAYKFCQMVGQQGKVILSDINSSMLEVGKEKLTNKGCVGNIEYVQANAECLPFPDNYFDCITISFGLRNVTDKDKALASMCRVLKPGGRLLVLEFSKPIIPLLSKVYDEYSFKALPFLGKIITQDAESYKYLAESICKHPDQQTLKQMMYDAGFDNVEYQNMTGGIVALHIGYKY.

S-adenosyl-L-methionine-binding positions include Thr73, Asp94, Asn122–Ala123, and Ser139.

The protein belongs to the class I-like SAM-binding methyltransferase superfamily. MenG/UbiE family.

It carries out the reaction a 2-demethylmenaquinol + S-adenosyl-L-methionine = a menaquinol + S-adenosyl-L-homocysteine + H(+). It catalyses the reaction a 2-methoxy-6-(all-trans-polyprenyl)benzene-1,4-diol + S-adenosyl-L-methionine = a 5-methoxy-2-methyl-3-(all-trans-polyprenyl)benzene-1,4-diol + S-adenosyl-L-homocysteine + H(+). Its pathway is quinol/quinone metabolism; menaquinone biosynthesis; menaquinol from 1,4-dihydroxy-2-naphthoate: step 2/2. It functions in the pathway cofactor biosynthesis; ubiquinone biosynthesis. In terms of biological role, methyltransferase required for the conversion of demethylmenaquinol (DMKH2) to menaquinol (MKH2) and the conversion of 2-polyprenyl-6-methoxy-1,4-benzoquinol (DDMQH2) to 2-polyprenyl-3-methyl-6-methoxy-1,4-benzoquinol (DMQH2). The sequence is that of Ubiquinone/menaquinone biosynthesis C-methyltransferase UbiE from Francisella tularensis subsp. holarctica (strain FTNF002-00 / FTA).